The primary structure comprises 255 residues: tRNA (guanine-N(7)-)-methyltransferase (255 aa).

The segment covering 1-11 (MSISDNSRDQL) has biased composition (basic and acidic residues). Positions 1–25 (MSISDNSRDQLGELPAGRPLQSDFD) are disordered. S-adenosyl-L-methionine contacts are provided by glutamate 83, glutamate 108, aspartate 135, and aspartate 158. Aspartate 158 is an active-site residue. A substrate-binding site is contributed by lysine 162. The tract at residues 164 to 169 (RHNKRR) is interaction with RNA. Residues aspartate 194 and 232 to 235 (TKFE) each bind substrate.

It belongs to the class I-like SAM-binding methyltransferase superfamily. TrmB family.

The catalysed reaction is guanosine(46) in tRNA + S-adenosyl-L-methionine = N(7)-methylguanosine(46) in tRNA + S-adenosyl-L-homocysteine. Its pathway is tRNA modification; N(7)-methylguanine-tRNA biosynthesis. Catalyzes the formation of N(7)-methylguanine at position 46 (m7G46) in tRNA. The protein is tRNA (guanine-N(7)-)-methyltransferase of Corynebacterium glutamicum (strain ATCC 13032 / DSM 20300 / JCM 1318 / BCRC 11384 / CCUG 27702 / LMG 3730 / NBRC 12168 / NCIMB 10025 / NRRL B-2784 / 534).